The chain runs to 244 residues: tRNA pseudouridine synthase B (244 aa).

The Nucleophile role is filled by Asp-46.

The protein belongs to the pseudouridine synthase TruB family. Type 1 subfamily.

The enzyme catalyses uridine(55) in tRNA = pseudouridine(55) in tRNA. Its function is as follows. Responsible for synthesis of pseudouridine from uracil-55 in the psi GC loop of transfer RNAs. This chain is tRNA pseudouridine synthase B, found in Bordetella avium (strain 197N).